Consider the following 126-residue polypeptide: C-type natriuretic peptide (126 aa).

A signal peptide spans M1–A23. The disordered stretch occupies residues P20–L71. Residues K24–R73 constitute a propeptide that is removed on maturation. Residues G26–P35 show a composition bias toward pro residues. Residues A46–N63 show a composition bias toward gly residues. Cysteines 110 and 126 form a disulfide.

This sequence belongs to the natriuretic peptide family. Degraded by IDE (in vitro). In the kidney, predominantly expressed in the distal tubular cells (at protein level).

The protein resides in the secreted. Functionally, hormone which plays a role in endochondral ossification through regulation of cartilaginous growth plate chondrocytes proliferation and differentiation. May also be vasoactive and natriuretic. Acts by specifically binding and stimulating NPR2 to produce cGMP. Binds the clearance receptor NPR3. This chain is C-type natriuretic peptide (NPPC), found in Homo sapiens (Human).